We begin with the raw amino-acid sequence, 693 residues long: Homeobox protein caupolican (693 aa).

Disordered regions lie at residues 20 to 104, 288 to 331, 387 to 453, 480 to 538, 561 to 627, and 648 to 693; these read TANT…PSRG, NKMT…PGNQ, AQSH…DCGI, YLGQ…PLSM, MHLP…SMHS, and YGHG…RSGS. Over residues 41–59 the composition is skewed to low complexity; the sequence is ASLSPSGGSTATGLTAGPL. A DNA-binding region (homeobox; TALE-type) is located at residues 226-288; that stretch reads LAARRKNATR…NARRRLKKEN (63 aa). Basic and acidic residues-rich tracts occupy residues 288-298 and 308-317; these read NKMTWEPKNKT and DDEKEKDAGD. Low complexity-rich tracts occupy residues 397–419 and 493–515; these read HPQQ…QLQH and QQLP…QQQQ. Residues 516–527 are compositionally biased toward basic residues; sequence QHHHHPHHHHPH. The span at 609-627 shows a compositional bias: low complexity; it reads SSGGSSSSSGSSHSSSMHS. Residues 651–675 show a composition bias toward basic residues; sequence GHSHGHGHGHGHGLGHGHGLGHGHG.

Belongs to the TALE/IRO homeobox family.

It is found in the nucleus. Its function is as follows. Controls proneural and vein forming genes. Positive transcriptional controller of ac-sc (achaete-scute). May act as an activator that interacts with the transcriptional complex assembled on the ac and sc promoters and participates in transcription initiation. The chain is Homeobox protein caupolican (caup) from Drosophila melanogaster (Fruit fly).